Reading from the N-terminus, the 451-residue chain is DNA double-strand break repair protein Mre11 (451 aa).

Positions 8, 10, 49, and 84 each coordinate Mn(2+). The active-site Proton donor is histidine 85. 3 residues coordinate Mn(2+): histidine 168, histidine 198, and histidine 200. Positions 374–451 (REDNPPDLGD…GRPSLDRWIG (78 aa)) are disordered. The span at 396–416 (GSEESSEEPEESDGEEVGLEV) shows a compositional bias: acidic residues.

This sequence belongs to the MRE11/RAD32 family. In terms of assembly, homodimer. Forms a heterotetramer composed of two Mre11 subunits and two Rad50 subunits. Mn(2+) is required as a cofactor.

Nuclease activity is regulated by Rad50. Its function is as follows. Part of the Rad50/Mre11 complex, which is involved in the early steps of DNA double-strand break (DSB) repair. The complex may facilitate opening of the processed DNA ends to aid in the recruitment of HerA and NurA. Mre11 binds to DSB ends and has both double-stranded 3'-5' exonuclease activity and single-stranded endonuclease activity. In Methanopyrus kandleri (strain AV19 / DSM 6324 / JCM 9639 / NBRC 100938), this protein is DNA double-strand break repair protein Mre11.